A 291-amino-acid chain; its full sequence is Endo-1,4-beta-xylanase 11B (291 aa).

Positions 1 to 19 are cleaved as a signal peptide; it reads MVAFSSLFLGASIAATALA. The GH11 domain occupies 34–222; the sequence is TYTQSATGTH…SSGSARINVG (189 aa). Residue Asn-93 is glycosylated (N-linked (GlcNAc...) asparagine). The Nucleophile role is filled by Glu-118. Glu-209 acts as the Proton donor in catalysis. The segment at 223–246 is disordered; it reads GGSTGGGNNGGGNNGGNPGGNPGG. The CBM1 domain maps to 255-291; the sequence is NCSPRWGQCGGQGWNGPTCCESGTTCRQQNQWYSQCL.

It belongs to the glycosyl hydrolase 11 (cellulase G) family.

The protein localises to the secreted. It catalyses the reaction Endohydrolysis of (1-&gt;4)-beta-D-xylosidic linkages in xylans.. Its pathway is glycan degradation; xylan degradation. The activity iss completely inhibited by Hg(2+), a metal ion that interacts with Trp and oxidizes the indole ring, and is significantly enhanced by beta-mercaptoethanol, which counteracts the oxidation effects of the S-S linkage between Cys residues. Functionally, endo-1,4-beta-xylanase involved in the hydrolysis of xylan, a major structural heterogeneous polysaccharide found in plant biomass representing the second most abundant polysaccharide in the biosphere, after cellulose. Shows maximum activity on soluble wheat arabinoxylan (defined as 100%), moderate activity on birchwood xylan (80.5%) and beechwood xylan (76.2%), and weak activity on insoluble wheat arabinoxylan (7.0%). Has no activity towards glucan or carboxymethyl cellulose-sodium (CMC-Na). The protein is Endo-1,4-beta-xylanase 11B of Humicola insolens (Soft-rot fungus).